The primary structure comprises 480 residues: Proline--tRNA ligase (480 aa).

This sequence belongs to the class-II aminoacyl-tRNA synthetase family. ProS type 3 subfamily. Homodimer.

It is found in the cytoplasm. The enzyme catalyses tRNA(Pro) + L-proline + ATP = L-prolyl-tRNA(Pro) + AMP + diphosphate. Functionally, catalyzes the attachment of proline to tRNA(Pro) in a two-step reaction: proline is first activated by ATP to form Pro-AMP and then transferred to the acceptor end of tRNA(Pro). The chain is Proline--tRNA ligase from Methanosarcina mazei (strain ATCC BAA-159 / DSM 3647 / Goe1 / Go1 / JCM 11833 / OCM 88) (Methanosarcina frisia).